The sequence spans 378 residues: UPF0754 membrane protein BCAH820_0954 (378 aa).

A run of 2 helical transmembrane segments spans residues 1 to 21 (MNIW…GGFT) and 357 to 377 (YLGA…LLFL).

The protein belongs to the UPF0754 family.

It localises to the cell membrane. The polypeptide is UPF0754 membrane protein BCAH820_0954 (Bacillus cereus (strain AH820)).